Consider the following 223-residue polypeptide: Adenylate kinase 4, mitochondrial (223 aa).

15 to 20 (GSGKGT) provides a ligand contact to a ribonucleoside 5'-triphosphate. The segment at 35–64 (SSGHFLRENIKANTEVGDMAKQYIEKGLLV) is NMP. AMP-binding residues include serine 36 and arginine 41. At lysine 60 the chain carries N6-succinyllysine. AMP contacts are provided by residues 62 to 64 (LLV), 89 to 92 (GFPR), and glutamine 96. The interval 125-162 (RRWIHPPSGRVYNLDFNPPHVHGMDDVTGEPLVQQEDD) is LID. Residues arginine 126 and 135–136 (VY) each bind a ribonucleoside 5'-triphosphate. Arginine 170 is a binding site for AMP. Lysine 175 is subject to N6-acetyllysine. An N6-acetyllysine; alternate mark is found at lysine 179 and lysine 186. N6-succinyllysine; alternate occurs at positions 179 and 186. Threonine 199 lines the a ribonucleoside 5'-triphosphate pocket.

The protein belongs to the adenylate kinase family. AK3 subfamily. Monomer. Interacts with SLC25A5/ANT2.

Its subcellular location is the mitochondrion matrix. It carries out the reaction a ribonucleoside 5'-phosphate + ATP = a ribonucleoside 5'-diphosphate + ADP. It catalyses the reaction AMP + ATP = 2 ADP. The enzyme catalyses GTP + AMP = GDP + ADP. The catalysed reaction is CMP + ATP = CDP + ADP. It carries out the reaction GTP + CMP = CDP + GDP. It catalyses the reaction dAMP + ATP = dADP + ADP. The enzyme catalyses dCMP + ATP = dCDP + ADP. The catalysed reaction is a 2'-deoxyribonucleoside 5'-diphosphate + ATP = a 2'-deoxyribonucleoside 5'-triphosphate + ADP. It carries out the reaction a ribonucleoside 5'-diphosphate + ATP = a ribonucleoside 5'-triphosphate + ADP. It catalyses the reaction GDP + ATP = GTP + ADP. The enzyme catalyses CDP + GTP = CTP + GDP. The catalysed reaction is CDP + ATP = CTP + ADP. It carries out the reaction UDP + ATP = UTP + ADP. It catalyses the reaction GTP + UDP = UTP + GDP. The enzyme catalyses dADP + GTP = dATP + GDP. The catalysed reaction is dCDP + GTP = dCTP + GDP. It carries out the reaction dCDP + ATP = dCTP + ADP. It catalyses the reaction dGDP + ATP = dGTP + ADP. The enzyme catalyses dTDP + GTP = dTTP + GDP. The catalysed reaction is dTDP + ATP = dTTP + ADP. Its function is as follows. Broad-specificity mitochondrial nucleoside phosphate kinase involved in cellular nucleotide homeostasis by catalyzing nucleoside-phosphate interconversions. Similar to other adenylate kinases, preferentially catalyzes the phosphorylation of the nucleoside monophosphate AMP with ATP as phosphate donor to produce ADP. Phosphorylates only AMP when using GTP as phosphate donor. In vitro, can also catalyze the phosphorylation of CMP, dAMP and dCMP and use GTP as an alternate phosphate donor. Moreover, exhibits a diphosphate kinase activity, producing ATP, CTP, GTP, UTP, TTP, dATP, dCTP and dGTP from the corresponding diphosphate substrates with either ATP or GTP as phosphate donors. Plays a role in controlling cellular ATP levels by regulating phosphorylation and activation of the energy sensor protein kinase AMPK. Plays a protective role in the cellular response to oxidative stress. The chain is Adenylate kinase 4, mitochondrial from Bos taurus (Bovine).